The primary structure comprises 268 residues: Chymotrypsin-C (268 aa).

The signal sequence occupies residues 1 to 16 (MLGITVLAAILACASC). A propeptide spans 17–29 (CGNPAFPPNLSTR) (activation peptide). 5 disulfides stabilise this stretch: Cys-17–Cys-141, Cys-59–Cys-75, Cys-155–Cys-222, Cys-186–Cys-202, and Cys-212–Cys-243. The N-linked (GlcNAc...) asparagine glycan is linked to Asn-25. The Peptidase S1 domain occupies 30–267 (VVGGEDAVPN…YNDWINEKIQ (238 aa)). His-74 (charge relay system) is an active-site residue. Asn-90 carries N-linked (GlcNAc...) asparagine glycosylation. Asp-121 (charge relay system) is an active-site residue. Ser-216 (charge relay system) is an active-site residue.

Belongs to the peptidase S1 family. Elastase subfamily. Pancreas.

The catalysed reaction is Preferential cleavage: Leu-|-Xaa, Tyr-|-Xaa, Phe-|-Xaa, Met-|-Xaa, Trp-|-Xaa, Gln-|-Xaa, Asn-|-Xaa.. Regulates activation and degradation of trypsinogens and procarboxypeptidases by targeting specific cleavage sites within their zymogen precursors. Has chymotrypsin-type protease activity and hypocalcemic activity. Cleaves TRY4 and TRY5 and thereby inhibits their autoactivation. This Rattus norvegicus (Rat) protein is Chymotrypsin-C (Ctrc).